A 484-amino-acid polypeptide reads, in one-letter code: Aspartyl/glutamyl-tRNA(Asn/Gln) amidotransferase subunit B (484 aa).

Belongs to the GatB/GatE family. GatB subfamily. As to quaternary structure, heterotrimer of A, B and C subunits.

The catalysed reaction is L-glutamyl-tRNA(Gln) + L-glutamine + ATP + H2O = L-glutaminyl-tRNA(Gln) + L-glutamate + ADP + phosphate + H(+). The enzyme catalyses L-aspartyl-tRNA(Asn) + L-glutamine + ATP + H2O = L-asparaginyl-tRNA(Asn) + L-glutamate + ADP + phosphate + 2 H(+). Its function is as follows. Allows the formation of correctly charged Asn-tRNA(Asn) or Gln-tRNA(Gln) through the transamidation of misacylated Asp-tRNA(Asn) or Glu-tRNA(Gln) in organisms which lack either or both of asparaginyl-tRNA or glutaminyl-tRNA synthetases. The reaction takes place in the presence of glutamine and ATP through an activated phospho-Asp-tRNA(Asn) or phospho-Glu-tRNA(Gln). In Bordetella bronchiseptica (strain ATCC BAA-588 / NCTC 13252 / RB50) (Alcaligenes bronchisepticus), this protein is Aspartyl/glutamyl-tRNA(Asn/Gln) amidotransferase subunit B.